A 342-amino-acid polypeptide reads, in one-letter code: Manganese-dependent ADP-ribose/CDP-alcohol diphosphatase (342 aa).

Position 1 is an N-acetylmethionine (M1). D25, Q27, D74, N110, H241, H278, and H280 together coordinate Zn(2+).

This sequence belongs to the ADPRibase-Mn family. Monomer. It depends on Mg(2+) as a cofactor.

The catalysed reaction is CDP-choline + H2O = phosphocholine + CMP + 2 H(+). It carries out the reaction ADP-D-ribose + H2O = D-ribose 5-phosphate + AMP + 2 H(+). It catalyses the reaction CDP-glycerol + H2O = sn-glycerol 3-phosphate + CMP + 2 H(+). Hydrolyzes ADP-ribose, IDP-ribose, CDP-glycerol, CDP-choline and CDP-ethanolamine, but not other non-reducing ADP-sugars or CDP-glucose. May be involved in immune cell signaling as suggested by the second-messenger role of ADP-ribose, which activates TRPM2 as a mediator of oxidative/nitrosative stress. The chain is Manganese-dependent ADP-ribose/CDP-alcohol diphosphatase (ADPRM) from Homo sapiens (Human).